The sequence spans 129 residues: Small ribosomal subunit protein uS11 (129 aa).

This sequence belongs to the universal ribosomal protein uS11 family. In terms of assembly, part of the 30S ribosomal subunit. Interacts with proteins S7 and S18. Binds to IF-3.

Its function is as follows. Located on the platform of the 30S subunit, it bridges several disparate RNA helices of the 16S rRNA. Forms part of the Shine-Dalgarno cleft in the 70S ribosome. This Bradyrhizobium diazoefficiens (strain JCM 10833 / BCRC 13528 / IAM 13628 / NBRC 14792 / USDA 110) protein is Small ribosomal subunit protein uS11.